Here is a 688-residue protein sequence, read N- to C-terminus: Polyribonucleotide nucleotidyltransferase (688 aa).

Residues aspartate 484 and aspartate 490 each coordinate Mg(2+). The 60-residue stretch at 550–609 (PTTEIFNVAPDKIVEIIGQGGRVIREIVEKFEVKIDLNKPSGEVKIMGNKERVLKTKEFI) folds into the KH domain. One can recognise an S1 motif domain in the interval 626 to 688 (DEVLEAQVKR…NKGKIALDLA (63 aa)).

It belongs to the polyribonucleotide nucleotidyltransferase family. It depends on Mg(2+) as a cofactor.

It is found in the cytoplasm. It catalyses the reaction RNA(n+1) + phosphate = RNA(n) + a ribonucleoside 5'-diphosphate. In terms of biological role, involved in mRNA degradation. Catalyzes the phosphorolysis of single-stranded polyribonucleotides processively in the 3'- to 5'-direction. This Helicobacter pylori (strain Shi470) protein is Polyribonucleotide nucleotidyltransferase.